A 267-amino-acid polypeptide reads, in one-letter code: 22 kDa alpha-zein 14 (267 aa).

The first 21 residues, 1–21 (MATKILSLLALLALFASATNA), serve as a signal peptide directing secretion.

The protein belongs to the zein family.

Functionally, zeins are major seed storage proteins. The polypeptide is 22 kDa alpha-zein 14 (Zea mays (Maize)).